Consider the following 223-residue polypeptide: Imidazoleglycerol-phosphate dehydratase (223 aa).

The protein belongs to the imidazoleglycerol-phosphate dehydratase family.

The catalysed reaction is D-erythro-1-(imidazol-4-yl)glycerol 3-phosphate = 3-(imidazol-4-yl)-2-oxopropyl phosphate + H2O. The protein operates within amino-acid biosynthesis; L-histidine biosynthesis; L-histidine from 5-phospho-alpha-D-ribose 1-diphosphate: step 6/9. In Torulaspora delbrueckii (Yeast), this protein is Imidazoleglycerol-phosphate dehydratase (HIS3).